A 273-amino-acid polypeptide reads, in one-letter code: Undecaprenyl-diphosphatase (273 aa).

7 helical membrane-spanning segments follow: residues 6-26, 45-65, 90-110, 116-136, 190-210, 222-242, and 252-272; these read SLLI…LPVS, AKTF…VMFW, LTLI…LLFH, LFNP…LIAA, YAAS…ATAL, GDIP…LIAI, and ISFI…YVVF.

This sequence belongs to the UppP family.

Its subcellular location is the cell inner membrane. It catalyses the reaction di-trans,octa-cis-undecaprenyl diphosphate + H2O = di-trans,octa-cis-undecaprenyl phosphate + phosphate + H(+). In terms of biological role, catalyzes the dephosphorylation of undecaprenyl diphosphate (UPP). Confers resistance to bacitracin. The chain is Undecaprenyl-diphosphatase from Escherichia coli O127:H6 (strain E2348/69 / EPEC).